We begin with the raw amino-acid sequence, 570 residues long: Vacuolar protein sorting-associated protein 45 (570 aa).

Residues serine 307 and serine 441 each carry the phosphoserine modification.

The protein belongs to the STXBP/unc-18/SEC1 family. As to quaternary structure, interacts with ZFYVE20. Interacts with STX6.

It is found in the golgi apparatus membrane. The protein localises to the endosome membrane. In terms of biological role, may play a role in vesicle-mediated protein trafficking from the Golgi stack through the trans-Golgi network. This Mus musculus (Mouse) protein is Vacuolar protein sorting-associated protein 45 (Vps45).